A 644-amino-acid polypeptide reads, in one-letter code: 3D-(3,5/4)-trihydroxycyclohexane-1,2-dione hydrolase 2 (644 aa).

Position 65 (E65) interacts with thiamine diphosphate. The segment at 442–522 is thiamine pyrophosphate binding; that stretch reads SLPGDLQRMW…INVLLFDNSG (81 aa). Residues D493 and N520 each coordinate Mg(2+).

This sequence belongs to the TPP enzyme family. The cofactor is Mg(2+). It depends on thiamine diphosphate as a cofactor.

The catalysed reaction is 3D-3,5/4-trihydroxycyclohexane-1,2-dione + H2O = 5-deoxy-D-glucuronate + H(+). It functions in the pathway polyol metabolism; myo-inositol degradation into acetyl-CoA; acetyl-CoA from myo-inositol: step 3/7. Involved in the cleavage of the C1-C2 bond of 3D-(3,5/4)-trihydroxycyclohexane-1,2-dione (THcHDO) to yield 5-deoxy-glucuronate (5DG). In Bacillus cereus (strain ZK / E33L), this protein is 3D-(3,5/4)-trihydroxycyclohexane-1,2-dione hydrolase 2.